Consider the following 345-residue polypeptide: UDP-3-O-acylglucosamine N-acyltransferase (345 aa).

The active-site Proton acceptor is the His253.

This sequence belongs to the transferase hexapeptide repeat family. LpxD subfamily. Homotrimer.

It catalyses the reaction a UDP-3-O-[(3R)-3-hydroxyacyl]-alpha-D-glucosamine + a (3R)-hydroxyacyl-[ACP] = a UDP-2-N,3-O-bis[(3R)-3-hydroxyacyl]-alpha-D-glucosamine + holo-[ACP] + H(+). It functions in the pathway bacterial outer membrane biogenesis; LPS lipid A biosynthesis. Its function is as follows. Catalyzes the N-acylation of UDP-3-O-acylglucosamine using 3-hydroxyacyl-ACP as the acyl donor. Is involved in the biosynthesis of lipid A, a phosphorylated glycolipid that anchors the lipopolysaccharide to the outer membrane of the cell. This is UDP-3-O-acylglucosamine N-acyltransferase from Rickettsia massiliae (strain Mtu5).